Reading from the N-terminus, the 218-residue chain is Putative copper transporter crmD (218 aa).

2 helical membrane passes run Y37–L57 and M176–V196.

This sequence belongs to the copper transporter (Ctr) (TC 1.A.56) family. SLC31A subfamily.

It is found in the membrane. The enzyme catalyses Cu(2+)(in) = Cu(2+)(out). Functionally, putative copper transporter; part of the crm gene cluster that mediates the biosynthesis of a yet unidentified copper-responsive metabolite. Probably involved in the transport of copper, even if it does not act as a major copper transporter. In contrast to crmA, is not involved in the biosynthesis of fumivalines or fumicicolins. In Aspergillus fumigatus (strain ATCC MYA-4609 / CBS 101355 / FGSC A1100 / Af293) (Neosartorya fumigata), this protein is Putative copper transporter crmD.